Here is a 271-residue protein sequence, read N- to C-terminus: MATADEQEEEMRMRLPLPLGGRVAIVTGASRGIGREIALNMAEKGAKVVIHYSSNQHAAEEVASIINNKSPSSGDGVRAIVCKADVAEPSQVAQLFDTAEHAFGPLHIVVNNAGVTDSKYPTLAQTSDEEWDRIFQVNCKGAFLCSREAAKRVVRGGGGRIINISSSLVAMPIPRYGAYTASKAAVEMMTRILAQELRGTQITANCVAPGPVATDMFFAGKSEAAVEAGVKSNPFERLGKVEDVAPLVAFLASDEGEWVNAQVVRVNGGQV.

Residue 25-49 (IVTGASRGIGREIALNMAEKGAKVV) participates in NAD(+) binding. Ser-166 serves as a coordination point for substrate. Residue Tyr-179 is the Proton acceptor of the active site.

Belongs to the short-chain dehydrogenases/reductases (SDR) family.

This is Short-chain type dehydrogenase/reductase from Picea abies (Norway spruce).